The primary structure comprises 564 residues: Kelch repeat and BTB domain-containing protein A55 (564 aa).

The 68-residue stretch at 21 to 88 (CDISIVINDE…IYGIPLSLTN (68 aa)) folds into the BTB domain. 6 Kelch repeats span residues 252–297 (IELI…VLDN), 298–346 (IIYM…ADDE), 347–395 (YIYC…MLNG), 397–441 (IYVM…VHDG), 442–492 (KIYI…SAHN), and 494–539 (LYVG…CEPI).

The protein belongs to the poxviruses A55 protein family. In terms of assembly, interacts (via BTB domain) with host CUL3.

It localises to the host cytoplasm. In terms of biological role, probable substrate-specific adapter of CUL3-containing E3 ubiquitin-protein ligases which mediate the ubiquitination and subsequent proteasomal degradation of host target proteins. This chain is Kelch repeat and BTB domain-containing protein A55 (KBTB1), found in Bos taurus (Bovine).